The chain runs to 230 residues: Ribosomal RNA small subunit methyltransferase Nep1 (230 aa).

S-adenosyl-L-methionine contacts are provided by residues Gly-184, Gly-189, and 205–210 (IYNKPL).

This sequence belongs to the class IV-like SAM-binding methyltransferase superfamily. RNA methyltransferase NEP1 family. As to quaternary structure, homodimer.

It carries out the reaction a pseudouridine in rRNA + S-adenosyl-L-methionine = an N(1)-methylpseudouridine in rRNA + S-adenosyl-L-homocysteine + H(+). Methyltransferase involved in ribosomal biogenesis. Specifically catalyzes the N1-methylation of the pseudouridine corresponding to position 914 in M.jannaschii 16S rRNA. The chain is Ribosomal RNA small subunit methyltransferase Nep1 from Staphylothermus marinus (strain ATCC 43588 / DSM 3639 / JCM 9404 / F1).